Consider the following 266-residue polypeptide: MSDHGRMHIPESGLATPAAAHSDDPPHPHFNRRVTSFRARRSTISDAQQATWDRLWPELGRQVRDGDAPAGRLDTTPAGRLDTEAWFGRHAPVVLEIGCGTGTSTLAMAQAEPDIDVVAVEVYRRGLAQLLSAMDREGVTNIRLIRGDGVDVLTHMFGPDSLTGVRVFFPDPWPKARHHKRRLLQPDTVALIADRLRPGGILHAATDHMGYAGHIAEVGDAEPRLRRIDPDDAGLPISTARPVTKYQRKALAGTEVAELLWEKTTP.

The segment at 1–32 (MSDHGRMHIPESGLATPAAAHSDDPPHPHFNR) is disordered. 4 residues coordinate S-adenosyl-L-methionine: E96, E121, D148, and D171. Residue D171 is part of the active site. Positions 175 and 207 each coordinate substrate.

This sequence belongs to the class I-like SAM-binding methyltransferase superfamily. TrmB family.

It carries out the reaction guanosine(46) in tRNA + S-adenosyl-L-methionine = N(7)-methylguanosine(46) in tRNA + S-adenosyl-L-homocysteine. Its pathway is tRNA modification; N(7)-methylguanine-tRNA biosynthesis. Functionally, catalyzes the formation of N(7)-methylguanine at position 46 (m7G46) in tRNA. The polypeptide is tRNA (guanine-N(7)-)-methyltransferase (Mycolicibacterium vanbaalenii (strain DSM 7251 / JCM 13017 / BCRC 16820 / KCTC 9966 / NRRL B-24157 / PYR-1) (Mycobacterium vanbaalenii)).